Here is a 319-residue protein sequence, read N- to C-terminus: D-alanine--D-alanine ligase (319 aa).

The ATP-grasp domain occupies 120-315; sequence KRVLAQAGVP…YPELLRRLVE (196 aa). Residue 147–198 participates in ATP binding; that stretch reads DPPFFVKPANTGSSVGISRVERFQDLEAALALAFRYDEKAVVEKALSPVREL. 3 residues coordinate Mg(2+): aspartate 270, glutamate 282, and asparagine 284.

This sequence belongs to the D-alanine--D-alanine ligase family. It depends on Mg(2+) as a cofactor. Requires Mn(2+) as cofactor.

Its subcellular location is the cytoplasm. The enzyme catalyses 2 D-alanine + ATP = D-alanyl-D-alanine + ADP + phosphate + H(+). Its pathway is cell wall biogenesis; peptidoglycan biosynthesis. Cell wall formation. This Thermus thermophilus (strain ATCC BAA-163 / DSM 7039 / HB27) protein is D-alanine--D-alanine ligase.